Here is a 262-residue protein sequence, read N- to C-terminus: Autophagy-related protein 27 (262 aa).

Residues 1 to 20 (MLKMRLLLTWVLLVLPLVNA) form the signal peptide. Positions 21–170 (LKCANNRVLR…IIKGPSGCKK (150 aa)) constitute an MRH domain. The Lumenal portion of the chain corresponds to 21-185 (LKCANNRVLR…EDGDVEESSG (165 aa)). Disulfide bonds link C23–C61, C73–C80, and C139–C168. The chain crosses the membrane as a helical span at residues 186–206 (LSWFTWLFIYAIFFTVVYLVV). Residues 207 to 262 (TSYTQTRGGSIDDFRHDFVERAKQFFTSLPAFVREVVSKVLGSAPNAAERGGYSAV) are Cytoplasmic-facing.

The protein belongs to the ATG27 family.

It is found in the cytoplasmic vesicle membrane. It localises to the golgi apparatus membrane. The protein resides in the mitochondrion membrane. Its function is as follows. Regulates the cytoplasm to vacuole transport (Cvt) vesicle formation. The sequence is that of Autophagy-related protein 27 (ATG27) from Vanderwaltozyma polyspora (strain ATCC 22028 / DSM 70294 / BCRC 21397 / CBS 2163 / NBRC 10782 / NRRL Y-8283 / UCD 57-17) (Kluyveromyces polysporus).